The primary structure comprises 389 residues: 8-amino-7-oxononanoate synthase (389 aa).

R18 is a substrate binding site. 104–105 provides a ligand contact to pyridoxal 5'-phosphate; it reads GY. H129 is a binding site for substrate. Positions 176, 204, and 232 each coordinate pyridoxal 5'-phosphate. N6-(pyridoxal phosphate)lysine is present on K235. T351 serves as a coordination point for substrate.

It belongs to the class-II pyridoxal-phosphate-dependent aminotransferase family. BioF subfamily. Homodimer. Pyridoxal 5'-phosphate is required as a cofactor.

The enzyme catalyses 6-carboxyhexanoyl-[ACP] + L-alanine + H(+) = (8S)-8-amino-7-oxononanoate + holo-[ACP] + CO2. It functions in the pathway cofactor biosynthesis; biotin biosynthesis. Catalyzes the decarboxylative condensation of pimeloyl-[acyl-carrier protein] and L-alanine to produce 8-amino-7-oxononanoate (AON), [acyl-carrier protein], and carbon dioxide. The protein is 8-amino-7-oxononanoate synthase of Citrifermentans bemidjiense (strain ATCC BAA-1014 / DSM 16622 / JCM 12645 / Bem) (Geobacter bemidjiensis).